Reading from the N-terminus, the 282-residue chain is Elongation factor Ts (282 aa).

The tract at residues 81–84 is involved in Mg(2+) ion dislocation from EF-Tu; sequence TDFV. Residues 218–270 show a composition bias toward low complexity; the sequence is KPAQPAQVAEVAAAPPAEPVADQPAAEPPAESVAPEPVVAESADAEPAPAAEG. The interval 218–282 is disordered; sequence KPAQPAQVAE…SKKGSTKKKK (65 aa). Residues 273–282 are compositionally biased toward basic residues; that stretch reads SKKGSTKKKK.

Belongs to the EF-Ts family.

The protein resides in the cytoplasm. Associates with the EF-Tu.GDP complex and induces the exchange of GDP to GTP. It remains bound to the aminoacyl-tRNA.EF-Tu.GTP complex up to the GTP hydrolysis stage on the ribosome. The polypeptide is Elongation factor Ts (Synechococcus sp. (strain JA-3-3Ab) (Cyanobacteria bacterium Yellowstone A-Prime)).